A 386-amino-acid polypeptide reads, in one-letter code: Synaptotagmin-5 (386 aa).

The span at 1–16 (MFPEPPTPGPPSPDTP) shows a compositional bias: pro residues. The tract at residues 1-23 (MFPEPPTPGPPSPDTPPDSSRIS) is disordered. The Vesicular segment spans residues 1-24 (MFPEPPTPGPPSPDTPPDSSRISH). Residues 25–45 (GPVPPWALATIVLVSGLLIFS) form a helical membrane-spanning segment. Topologically, residues 46–386 (CCFCLYRKSC…PDRVRLLPAP (341 aa)) are cytoplasmic. 2 consecutive C2 domains span residues 108-227 (ELGR…QAWR) and 239-372 (KLGD…AQWH). Residues L138, D139, D145, D197, F198, D199, S202, D205, D270, D276, D330, and D332 each coordinate Ca(2+).

It belongs to the synaptotagmin family. In terms of assembly, homodimer. Interacts with both alpha- and beta-tubulin. Ca(2+) serves as cofactor.

It localises to the cytoplasmic vesicle. It is found in the secretory vesicle. The protein localises to the synaptic vesicle membrane. Its subcellular location is the recycling endosome membrane. May be involved in Ca(2+)-dependent exocytosis of secretory vesicles through Ca(2+) and phospholipid binding to the C2 domain or may serve as Ca(2+) sensors in the process of vesicular trafficking and exocytosis. Regulates the Ca(2+)-dependent secretion of norepinephrine in PC12 cells. Required for export from the endocytic recycling compartment to the cell surface. The polypeptide is Synaptotagmin-5 (SYT5) (Homo sapiens (Human)).